Reading from the N-terminus, the 194-residue chain is Holliday junction branch migration complex subunit RuvA (194 aa).

The interval methionine 1–lysine 62 is domain I. The interval threonine 63–aspartate 136 is domain II. The interval aspartate 136–proline 140 is flexible linker. A domain III region spans residues leucine 141–serine 194.

Belongs to the RuvA family. Homotetramer. Forms an RuvA(8)-RuvB(12)-Holliday junction (HJ) complex. HJ DNA is sandwiched between 2 RuvA tetramers; dsDNA enters through RuvA and exits via RuvB. An RuvB hexamer assembles on each DNA strand where it exits the tetramer. Each RuvB hexamer is contacted by two RuvA subunits (via domain III) on 2 adjacent RuvB subunits; this complex drives branch migration. In the full resolvosome a probable DNA-RuvA(4)-RuvB(12)-RuvC(2) complex forms which resolves the HJ.

It localises to the cytoplasm. Functionally, the RuvA-RuvB-RuvC complex processes Holliday junction (HJ) DNA during genetic recombination and DNA repair, while the RuvA-RuvB complex plays an important role in the rescue of blocked DNA replication forks via replication fork reversal (RFR). RuvA specifically binds to HJ cruciform DNA, conferring on it an open structure. The RuvB hexamer acts as an ATP-dependent pump, pulling dsDNA into and through the RuvAB complex. HJ branch migration allows RuvC to scan DNA until it finds its consensus sequence, where it cleaves and resolves the cruciform DNA. The polypeptide is Holliday junction branch migration complex subunit RuvA (Halothermothrix orenii (strain H 168 / OCM 544 / DSM 9562)).